A 286-amino-acid polypeptide reads, in one-letter code: MTIINGKTKLLGVIGDPIGHTLSPPMHNAAIDALGLNYVYLPLPIAPENLETAIAGLSAIDLEGFSVTIPHKLAIIPLLSQITEKARLVGAVNTVWRTETGWQGTNTDVDGFLAPLKSLDKDWSQVNPVILGNGGAARAVVVACAQLGCGEIHVVGRNQKKLDPFKESWANTSLYDLLEVHSWDELEGLVSTTELLINSTPIGMSPQGEQSPVELELLDLLPPSAIAYDLIYNPRPTKFLRLARTRGIRIIDGLEMLVNQGAIALEIWLGQPVPVSVMREALLKQF.

Shikimate is bound by residues 21–23 (TLS) and T68. The active-site Proton acceptor is the K72. E84 is an NADP(+) binding site. Shikimate contacts are provided by N93 and D108. Residues 132–136 (GNGGA) and L230 contribute to the NADP(+) site. Y232 is a binding site for shikimate. G253 serves as a coordination point for NADP(+).

It belongs to the shikimate dehydrogenase family. As to quaternary structure, homodimer.

It carries out the reaction shikimate + NADP(+) = 3-dehydroshikimate + NADPH + H(+). Its pathway is metabolic intermediate biosynthesis; chorismate biosynthesis; chorismate from D-erythrose 4-phosphate and phosphoenolpyruvate: step 4/7. In terms of biological role, involved in the biosynthesis of the chorismate, which leads to the biosynthesis of aromatic amino acids. Catalyzes the reversible NADPH linked reduction of 3-dehydroshikimate (DHSA) to yield shikimate (SA). The protein is Shikimate dehydrogenase (NADP(+)) of Microcystis aeruginosa (strain NIES-843 / IAM M-2473).